Reading from the N-terminus, the 149-residue chain is Arginine repressor (149 aa).

It belongs to the ArgR family.

Its subcellular location is the cytoplasm. It functions in the pathway amino-acid biosynthesis; L-arginine biosynthesis [regulation]. Its function is as follows. Regulates arginine biosynthesis genes. The sequence is that of Arginine repressor from Listeria welshimeri serovar 6b (strain ATCC 35897 / DSM 20650 / CCUG 15529 / CIP 8149 / NCTC 11857 / SLCC 5334 / V8).